We begin with the raw amino-acid sequence, 473 residues long: ATP synthase subunit beta (473 aa).

Residue 158-165 (GGAGVGKT) coordinates ATP.

It belongs to the ATPase alpha/beta chains family. In terms of assembly, F-type ATPases have 2 components, CF(1) - the catalytic core - and CF(0) - the membrane proton channel. CF(1) has five subunits: alpha(3), beta(3), gamma(1), delta(1), epsilon(1). CF(0) has three main subunits: a(1), b(2) and c(9-12). The alpha and beta chains form an alternating ring which encloses part of the gamma chain. CF(1) is attached to CF(0) by a central stalk formed by the gamma and epsilon chains, while a peripheral stalk is formed by the delta and b chains.

It localises to the cell membrane. It catalyses the reaction ATP + H2O + 4 H(+)(in) = ADP + phosphate + 5 H(+)(out). Its function is as follows. Produces ATP from ADP in the presence of a proton gradient across the membrane. The catalytic sites are hosted primarily by the beta subunits. In Bacillus velezensis (strain DSM 23117 / BGSC 10A6 / LMG 26770 / FZB42) (Bacillus amyloliquefaciens subsp. plantarum), this protein is ATP synthase subunit beta.